The chain runs to 187 residues: V-type ATP synthase subunit E (187 aa).

Belongs to the V-ATPase E subunit family.

In terms of biological role, produces ATP from ADP in the presence of a proton gradient across the membrane. This Clostridioides difficile (strain 630) (Peptoclostridium difficile) protein is V-type ATP synthase subunit E.